The chain runs to 172 residues: MAFEDLLDDPVVQKYLHELVGPKGMPVAAAPPDGEVTDEELAERLGLELNDVRRALFILYENDLATYRRVRDEDSGWLTYLWTFQYENVPGNLREEMDRLLEALVDRREYELENEFYLCEVCSIRFEFGEAMDLGFECPECGSAVEAMENTDLVDAMDDRIERLRSELAVEA.

The HTH TFE/IIEalpha-type domain occupies 8–90 (DDPVVQKYLH…LWTFQYENVP (83 aa)).

The protein belongs to the TFE family. In terms of assembly, monomer. Interaction with RNA polymerase subunits RpoF and RpoE is necessary for Tfe stimulatory transcription activity. Able to interact with Tbp and RNA polymerase in the absence of DNA promoter. Interacts both with the preinitiation and elongation complexes.

Transcription factor that plays a role in the activation of archaeal genes transcribed by RNA polymerase. Facilitates transcription initiation by enhancing TATA-box recognition by TATA-box-binding protein (Tbp), and transcription factor B (Tfb) and RNA polymerase recruitment. Not absolutely required for transcription in vitro, but particularly important in cases where Tbp or Tfb function is not optimal. It dynamically alters the nucleic acid-binding properties of RNA polymerases by stabilizing the initiation complex and destabilizing elongation complexes. Seems to translocate with the RNA polymerase following initiation and acts by binding to the non template strand of the transcription bubble in elongation complexes. The polypeptide is Transcription factor E (Halobacterium salinarum (strain ATCC 700922 / JCM 11081 / NRC-1) (Halobacterium halobium)).